The primary structure comprises 268 residues: Undecaprenyl-diphosphatase (268 aa).

A run of 7 helical transmembrane segments spans residues 47–67 (FTIL…FAKL), 83–103 (FVIG…LAGG), 109–129 (LFNP…LLWV), 144–164 (FPLP…IPGV), 184–204 (AAEF…VYDL), 217–237 (LIVA…VKSF), and 246–266 (FTLF…ALAL).

The protein belongs to the UppP family.

The protein localises to the cell inner membrane. The enzyme catalyses di-trans,octa-cis-undecaprenyl diphosphate + H2O = di-trans,octa-cis-undecaprenyl phosphate + phosphate + H(+). In terms of biological role, catalyzes the dephosphorylation of undecaprenyl diphosphate (UPP). Confers resistance to bacitracin. This Rhodopseudomonas palustris (strain BisB18) protein is Undecaprenyl-diphosphatase.